Here is a 464-residue protein sequence, read N- to C-terminus: L-cysteine:1D-myo-inositol 2-amino-2-deoxy-alpha-D-glucopyranoside ligase (464 aa).

Cys-67 provides a ligand contact to Zn(2+). Residues 67 to 70 (CGIT), Thr-82, and 105 to 107 (NVT) contribute to the L-cysteinyl-5'-AMP site. The 'HIGH' region signature appears at 69–79 (ITPYDATHLGH). Positions 207-212 (ERGGDP) match the 'ERGGDP' region motif. Trp-247 contacts L-cysteinyl-5'-AMP. Cys-251 provides a ligand contact to Zn(2+). Residue 269–271 (GTD) participates in L-cysteinyl-5'-AMP binding. His-276 is a binding site for Zn(2+). L-cysteinyl-5'-AMP is bound at residue Val-303. The short motif at 309–313 (KMSKS) is the 'KMSKS' region element. Residues 410–435 (AGGSAGAGPDPTHQGGPVRGSGGDVP) are disordered.

It belongs to the class-I aminoacyl-tRNA synthetase family. MshC subfamily. As to quaternary structure, monomer. Zn(2+) is required as a cofactor.

It carries out the reaction 1D-myo-inositol 2-amino-2-deoxy-alpha-D-glucopyranoside + L-cysteine + ATP = 1D-myo-inositol 2-(L-cysteinylamino)-2-deoxy-alpha-D-glucopyranoside + AMP + diphosphate + H(+). Catalyzes the ATP-dependent condensation of GlcN-Ins and L-cysteine to form L-Cys-GlcN-Ins. The sequence is that of L-cysteine:1D-myo-inositol 2-amino-2-deoxy-alpha-D-glucopyranoside ligase from Frankia casuarinae (strain DSM 45818 / CECT 9043 / HFP020203 / CcI3).